We begin with the raw amino-acid sequence, 132 residues long: Fatty acid-binding protein, adipocyte (132 aa).

An N-acetylcysteine modification is found at C2. A Phosphoserine modification is found at S13. Y20 carries the post-translational modification Phosphotyrosine; by Tyr-kinases. The short motif at 22–32 is the Nuclear localization signal element; that stretch reads KEVGVGFATRK. 127–129 is a binding site for a fatty acid; sequence RVY.

Belongs to the calycin superfamily. Fatty-acid binding protein (FABP) family. In terms of assembly, monomer. Homodimer. Interacts with PPARG.

It is found in the cytoplasm. Its subcellular location is the nucleus. Its function is as follows. Lipid transport protein in adipocytes. Binds both long chain fatty acids and retinoic acid. Delivers long-chain fatty acids and retinoic acid to their cognate receptors in the nucleus. The sequence is that of Fatty acid-binding protein, adipocyte (Fabp4) from Mus musculus (Mouse).